Reading from the N-terminus, the 262-residue chain is Transcription factor bHLH81 (262 aa).

Residues 1-29 (MQPTSVGSSGGGDDGGGRGGGGGLSRSGL) are disordered. Gly residues predominate over residues 8 to 25 (SSGGGDDGGGRGGGGGLS). The bHLH domain maps to 190–240 (CATHPRSIAERVRRTRISDRIRKLQELVPNMDKQTNTADMLEEAVEYVKVL).

In terms of assembly, homodimer. Expressed in flowers.

It localises to the nucleus. This is Transcription factor bHLH81 (BHLH81) from Arabidopsis thaliana (Mouse-ear cress).